Reading from the N-terminus, the 343-residue chain is Outer envelope pore protein 37, chloroplastic (343 aa).

2 stretches are compositionally biased toward polar residues: residues methionine 1 to leucine 11 and threonine 23 to threonine 43. The tract at residues methionine 1–threonine 43 is disordered. The transit peptide at methionine 1 to serine 73 directs the protein to the chloroplast. Residues cysteine 74 to leucine 76 are Cytoplasmic-facing. The beta stranded transmembrane segment at phenylalanine 77–serine 86 threads the bilayer. At phenylalanine 87 to threonine 103 the chain is on the chloroplast intermembrane side. The chain crosses the membrane as a beta stranded span at residues serine 104 to valine 113. Topologically, residues glutamate 114 to arginine 129 are cytoplasmic. Residues leucine 130–asparagine 137 traverse the membrane as a beta stranded segment. At valine 138–proline 154 the chain is on the chloroplast intermembrane side. A beta stranded transmembrane segment spans residues glycine 155–valine 164. The Cytoplasmic segment spans residues proline 165–proline 169. A beta stranded transmembrane segment spans residues arginine 170–glycine 178. Residues glutamate 179 to glutamate 219 are Chloroplast intermembrane-facing. Residues glutamate 220 to lysine 228 traverse the membrane as a beta stranded segment. Residues aspartate 229–aspartate 230 lie on the Cytoplasmic side of the membrane. Residues alanine 231–leucine 240 traverse the membrane as a beta stranded segment. A topological domain (chloroplast intermembrane) is located at residue proline 241. The beta stranded transmembrane segment at serine 242–lysine 250 threads the bilayer. Topologically, residues arginine 251–aspartate 257 are cytoplasmic. A beta stranded membrane pass occupies residues lysine 258 to serine 267. The Chloroplast intermembrane segment spans residues asparagine 268–methionine 269. The beta stranded transmembrane segment at tryptophan 270–glycine 279 threads the bilayer. The Cytoplasmic portion of the chain corresponds to lysine 280–alanine 286. The beta stranded transmembrane segment at glycine 287–tryptophan 296 threads the bilayer. The Chloroplast intermembrane portion of the chain corresponds to alanine 297–lysine 316. The chain crosses the membrane as a beta stranded span at residues valine 317–aspartate 326. Topologically, residues aspartate 327 to isoleucine 343 are cytoplasmic.

This sequence belongs to the plastid outer envelope porin OEP37 (TC 1.B.47) family. Forms an hourglass-shaped multimeric complex. Ubiquitously expressed at low levels. Mostly present in cotyledons, and accumulates in seedlings and embryos.

Its subcellular location is the plastid. The protein resides in the chloroplast outer membrane. Its function is as follows. Voltage-dependent peptide-sensitive high conductance rectifying cation channel with a strong affinity for TIC32 that is imported into the chloroplast. Conductance is pH-dependent decreasing with decreasing pH values. The polypeptide is Outer envelope pore protein 37, chloroplastic (OEP37) (Arabidopsis thaliana (Mouse-ear cress)).